Here is a 510-residue protein sequence, read N- to C-terminus: D-alanine--D-alanyl carrier protein ligase (510 aa).

ATP is bound at residue 157–158 (TS). Asp-202 lines the D-alanine pocket. An ATP-binding site is contributed by 297 to 302 (NTYGPT). Val-306 provides a ligand contact to D-alanine. Residues Asp-389 and Lys-498 each contribute to the ATP site. Lys-498 contacts D-alanine.

Belongs to the ATP-dependent AMP-binding enzyme family. DltA subfamily.

The protein resides in the cytoplasm. It carries out the reaction holo-[D-alanyl-carrier protein] + D-alanine + ATP = D-alanyl-[D-alanyl-carrier protein] + AMP + diphosphate. Its pathway is cell wall biogenesis; lipoteichoic acid biosynthesis. Its function is as follows. Catalyzes the first step in the D-alanylation of lipoteichoic acid (LTA), the activation of D-alanine and its transfer onto the D-alanyl carrier protein (Dcp) DltC. In an ATP-dependent two-step reaction, forms a high energy D-alanyl-AMP intermediate, followed by transfer of the D-alanyl residue as a thiol ester to the phosphopantheinyl prosthetic group of the Dcp. D-alanylation of LTA plays an important role in modulating the properties of the cell wall in Gram-positive bacteria, influencing the net charge of the cell wall. The sequence is that of D-alanine--D-alanyl carrier protein ligase from Listeria monocytogenes serovar 1/2a (strain ATCC BAA-679 / EGD-e).